Consider the following 514-residue polypeptide: Peptide chain release factor 3 (514 aa).

The region spanning 8–268 is the tr-type G domain; the sequence is KKRRTFAIIS…TFLKFAPEPH (261 aa). GTP-binding positions include 17 to 24, 85 to 89, and 139 to 142; these read SHPDAGKT, DTPGH, and NKLD.

The protein belongs to the TRAFAC class translation factor GTPase superfamily. Classic translation factor GTPase family. PrfC subfamily.

The protein resides in the cytoplasm. In terms of biological role, increases the formation of ribosomal termination complexes and stimulates activities of RF-1 and RF-2. It binds guanine nucleotides and has strong preference for UGA stop codons. It may interact directly with the ribosome. The stimulation of RF-1 and RF-2 is significantly reduced by GTP and GDP, but not by GMP. The protein is Peptide chain release factor 3 of Streptococcus gordonii (strain Challis / ATCC 35105 / BCRC 15272 / CH1 / DL1 / V288).